Consider the following 279-residue polypeptide: Pleckstrin homology domain-containing family F member 1 (279 aa).

The region spanning 35-131 is the PH domain; it reads VLLGEGVLTK…WISHIEECVR (97 aa). The FYVE-type zinc finger occupies 152–212; it reads DKATDICMRC…VCSLCYRELA (61 aa). Zn(2+) is bound by residues Cys-158, Cys-161, Cys-175, Cys-178, Cys-183, Cys-186, Cys-204, and Cys-207. Residues 218–264 form a disordered region; sequence EEAEEQGAGSPGQPAHLARPICGASSGDDDDSDEDKEGSRDGDWPSS. Residues 244-253 show a composition bias toward acidic residues; the sequence is GDDDDSDEDK.

In terms of tissue distribution, highly expressed in heart and skeletal muscle. Weakly expressed in brain, thymus, spleen, kidney, liver, small intestine, placenta and lung.

It is found in the nucleus. The protein resides in the cytoplasm. The protein localises to the perinuclear region. It localises to the lysosome. In terms of biological role, may induce apoptosis through the lysosomal-mitochondrial pathway. Translocates to the lysosome initiating the permeabilization of lysosomal membrane (LMP) and resulting in the release of CTSD and CTSL to the cytoplasm. Triggers the caspase-independent apoptosis by altering mitochondrial membrane permeabilization (MMP) resulting in the release of PDCD8. This chain is Pleckstrin homology domain-containing family F member 1 (PLEKHF1), found in Homo sapiens (Human).